A 593-amino-acid chain; its full sequence is Aspartate--tRNA(Asp/Asn) ligase (593 aa).

Glu-182 contacts L-aspartate. The aspartate stretch occupies residues 206-209 (QLFK). Arg-228 serves as a coordination point for L-aspartate. ATP contacts are provided by residues 228 to 230 (RDE) and Gln-237. His-455 serves as a coordination point for L-aspartate. Glu-489 provides a ligand contact to ATP. Arg-496 lines the L-aspartate pocket. An ATP-binding site is contributed by 541–544 (GLDR).

Belongs to the class-II aminoacyl-tRNA synthetase family. Type 1 subfamily. Homodimer.

Its subcellular location is the cytoplasm. It carries out the reaction tRNA(Asx) + L-aspartate + ATP = L-aspartyl-tRNA(Asx) + AMP + diphosphate. Functionally, aspartyl-tRNA synthetase with relaxed tRNA specificity since it is able to aspartylate not only its cognate tRNA(Asp) but also tRNA(Asn). Reaction proceeds in two steps: L-aspartate is first activated by ATP to form Asp-AMP and then transferred to the acceptor end of tRNA(Asp/Asn). The chain is Aspartate--tRNA(Asp/Asn) ligase from Geotalea uraniireducens (strain Rf4) (Geobacter uraniireducens).